Reading from the N-terminus, the 328-residue chain is Putative HTH-type transcriptional regulatory protein MA_3524 (328 aa).

An HTH cro/C1-type domain is found at 132 to 190 (LKKARTDQSMSLGTLASMVGVSRRTISKYEEEGMDASIDVVLQLEDIFGVELARPIDIL). Residues 143–162 (LGTLASMVGVSRRTISKYEE) constitute a DNA-binding region (H-T-H motif).

This is Putative HTH-type transcriptional regulatory protein MA_3524 from Methanosarcina acetivorans (strain ATCC 35395 / DSM 2834 / JCM 12185 / C2A).